The primary structure comprises 440 residues: 23S rRNA (uracil(1939)-C(5))-methyltransferase RlmD (440 aa).

In terms of domain architecture, TRAM spans 11–69; sequence STLDTKHQPVTIERLDHQGSGLAFLHKKPLFVDGALPGEEVLIQLTENKSKYARGQLIK. 4 residues coordinate [4Fe-4S] cluster: Cys-82, Cys-88, Cys-91, and Cys-169. Residues Gln-272, Phe-301, Asn-306, Glu-322, Asn-349, and Asp-370 each coordinate S-adenosyl-L-methionine. Catalysis depends on Cys-396, which acts as the Nucleophile.

This sequence belongs to the class I-like SAM-binding methyltransferase superfamily. RNA M5U methyltransferase family. RlmD subfamily.

The catalysed reaction is uridine(1939) in 23S rRNA + S-adenosyl-L-methionine = 5-methyluridine(1939) in 23S rRNA + S-adenosyl-L-homocysteine + H(+). In terms of biological role, catalyzes the formation of 5-methyl-uridine at position 1939 (m5U1939) in 23S rRNA. In Vibrio cholerae serotype O1 (strain ATCC 39541 / Classical Ogawa 395 / O395), this protein is 23S rRNA (uracil(1939)-C(5))-methyltransferase RlmD.